The sequence spans 281 residues: MDNIKVLFLGDVYGKAGRKIISDHLPIIKKKYQLNLIIANAENTTNGKGLSWNHYQILKQAGIDYITMGNHTWFQKQDLELVLNQVDVIRPLNLMQDFNYFQLGKGSYLFSLNGLKIRITNLLGTSINLPFAITNPFVELKKLVLTKDCDLHIVDFHAETTSEKNAFCMVFDGYVTAILGTHTHVPSNDLRITPKGSVYITDVGMCGPGFGSVIGANPKQSIKLFCTGERQFFEVSNCGAQLNGVFFEVCSKTNQVVKIEQIRIVLDDEKYLANDYFNLVE.

Residues Asp11, Glu42, Asn43, and Asn70 each coordinate Fe cation. His71 (proton donor) is an active-site residue. Positions 157, 182, and 184 each coordinate Fe cation.

Belongs to the YmdB-like family. Requires Fe(3+) as cofactor.

This chain is Putative phosphatase/phosphodiesterase MG246, found in Mycoplasma genitalium (strain ATCC 33530 / DSM 19775 / NCTC 10195 / G37) (Mycoplasmoides genitalium).